The following is a 344-amino-acid chain: Heat-inducible transcription repressor HrcA (344 aa).

The protein belongs to the HrcA family.

Negative regulator of class I heat shock genes (grpE-dnaK-dnaJ and groELS operons). Prevents heat-shock induction of these operons. The protein is Heat-inducible transcription repressor HrcA of Streptococcus equi subsp. zooepidemicus (strain H70).